The primary structure comprises 235 residues: High affinity immunoglobulin epsilon receptor subunit beta (235 aa).

Residues 1–23 (MDTENRSRADLALPNPQESSSAP) are disordered. The Cytoplasmic portion of the chain corresponds to 1–51 (MDTENRSRADLALPNPQESSSAPDIELLEASPAKAAPPKQTWRTFLKKELE). A helical transmembrane segment spans residues 52–71 (FLGATQILVGLICLCFGTIV). Residues 72-89 (CSVLYVSDFDEEVLLLYK) are Extracellular-facing. A helical transmembrane segment spans residues 90-109 (LGYPFWGAVLFVLSGFLSII). The Cytoplasmic segment spans residues 110-122 (SERKNTLYLVRGS). A helical membrane pass occupies residues 123-142 (LGANIVSSIAAGTGIAMLIL). Over 143–171 (NLTNNFAYMNNCKNVTEDDGCFVASFTTE) the chain is Extracellular. A helical transmembrane segment spans residues 172–191 (LVLMMLFLTILAFCSAVLFT). Over 192–235 (IYRIGQELESKKVPDDRLYEELNVYSPIYSELEDKGETSSPVDS) the chain is Cytoplasmic. A phosphotyrosine mark is found at Y210 and Y216. S217 carries the post-translational modification Phosphoserine. A Phosphotyrosine modification is found at Y220.

It belongs to the MS4A family. As to quaternary structure, tetramer of an alpha chain, a beta chain, and two disulfide linked gamma chains. Binds LILRB1. Interacts with FGR. Interacts with FGR and FES/FPS. Interacts with LYN. Phosphorylated on tyrosine residues by LYN.

It localises to the membrane. In terms of biological role, high affinity receptor that binds to the Fc region of immunoglobulins epsilon. Aggregation of FCER1 by multivalent antigens is required for the full mast cell response, including the release of preformed mediators (such as histamine) by degranulation and de novo production of lipid mediators and cytokines. Also mediates the secretion of important lymphokines. Binding of allergen to receptor-bound IgE leads to cell activation and the release of mediators responsible for the manifestations of allergy. The chain is High affinity immunoglobulin epsilon receptor subunit beta (Ms4a2) from Mus musculus (Mouse).